Reading from the N-terminus, the 966-residue chain is Regulator of G-protein signaling 3 (966 aa).

The PDZ domain occupies 18-95; the sequence is QITIRRGKDG…EIILLVWRVV (78 aa). The segment at 115–135 is disordered; that stretch reads THDLLSPPNKREKNCTHGAPV. At Arg167 the chain carries Omega-N-methylarginine. 2 disordered regions span residues 403–618 and 637–704; these read EADE…TGAV and YSQL…RVQN. Polar residues-rich tracts occupy residues 527 to 548 and 576 to 594; these read PETS…TELP and SSAS…SSLG. Residues 649-675 are compositionally biased toward acidic residues; the sequence is GEDEDAEEGEEGGEGEEDEEDDTSDDN. The segment covering 676–686 has biased composition (basic and acidic residues); it reads YGDRSEAKRSS. A phosphoserine mark is found at Ser712, Ser715, Ser747, and Ser776. The segment at 806–830 is disordered; that stretch reads FRRRNESPGAQPASKTDKTTKSFKP. The segment covering 820–830 has biased composition (basic and acidic residues); it reads KTDKTTKSFKP. The 126-residue stretch at 841 to 966 folds into the RGS domain; the sequence is SLEKLLLHKY…INQKKMSPPL (126 aa).

In terms of assembly, binds the GNB1-GNG2 heterodimer. Binds EFNB1 and EFNB2. Post-translationally, phosphorylated by cyclic GMP-dependent protein kinase. ISGylated. Detected in embryos from E8.5-16.5 in cortical ventricular zone, dorsal root ganglia and cerebellar primordia. Isoform 3 is detected in testis and in spermatocytes from newborn mice. Levels increase and reach a maximum after 21 days; after this they decrease again. Long isoforms are widely expressed.

Its subcellular location is the cytoplasm. It localises to the cell membrane. The protein localises to the nucleus. In terms of biological role, down-regulates signaling from heterotrimeric G-proteins by increasing the GTPase activity of the alpha subunits, thereby driving them into their inactive GDP-bound form. Down-regulates G-protein-mediated release of inositol phosphates and activation of MAP kinases. The polypeptide is Regulator of G-protein signaling 3 (Rgs3) (Mus musculus (Mouse)).